Reading from the N-terminus, the 814-residue chain is Telomere repeats-binding bouquet formation protein 1 (814 aa).

2 ARM repeats span residues 93-136 and 327-368; these read EMFR…KTSR and GGLP…GMST. Disordered regions lie at residues 461-521, 551-584, and 653-753; these read DQDS…ELKR, STPT…LSDD, and FRRS…KRQN. Positions 488–512 form a coiled coil; sequence EKSKKRKHKQKRENERSDNQETRRE. Composition is skewed to basic and acidic residues over residues 499-521, 565-577, and 679-688; these read RENE…ELKR, IFRH…RNQR, and EHSTSAQEHK. Basic residues predominate over residues 689–699; it reads QKSKREKHKLS. The span at 714–741 shows a compositional bias: basic and acidic residues; that stretch reads RPRETYSPDVKQWTDHRHLKKSSEDARS. Positions 746–799 constitute a Myb-like domain; sequence GRHRKRQNWSDKELCYLTKGVKRFGHSWNTILWKYPFHPGRTNVDLAKKFYHMQ.

This sequence belongs to the TERB1 family. Component of the MAJIN-TERB1-TERB2 complex.

It is found in the chromosome. It localises to the telomere. The protein localises to the nucleus inner membrane. Functionally, meiosis-specific telomere-associated protein involved in meiotic telomere attachment to the nucleus inner membrane, a crucial step for homologous pairing and synapsis. Component of the MAJIN-TERB1-TERB2 complex, which promotes telomere cap exchange by mediating attachment of telomeric DNA to the inner nuclear membrane and replacement of the protective cap of telomeric chromosomes: in early meiosis, the MAJIN-TERB1-TERB2 complex associates with telomeric DNA and the shelterin/telosome complex. During prophase, the complex matures and promotes release of the shelterin/telosome complex from telomeric DNA. In the MAJIN-TERB1-TERB2 complex, TERB1 probably mediates association with the shelterin/telosome complex. This Danio rerio (Zebrafish) protein is Telomere repeats-binding bouquet formation protein 1 (ccdc79).